Reading from the N-terminus, the 356-residue chain is Mannonate dehydratase (356 aa).

Belongs to the mannonate dehydratase family. Fe(2+) serves as cofactor. The cofactor is Mn(2+).

It carries out the reaction D-mannonate = 2-dehydro-3-deoxy-D-gluconate + H2O. It functions in the pathway carbohydrate metabolism; pentose and glucuronate interconversion. In terms of biological role, catalyzes the dehydration of D-mannonate. The protein is Mannonate dehydratase of Levilactobacillus brevis (strain ATCC 367 / BCRC 12310 / CIP 105137 / JCM 1170 / LMG 11437 / NCIMB 947 / NCTC 947) (Lactobacillus brevis).